The sequence spans 403 residues: 4,4'-dithiodibutanoate disulfide reductase (403 aa).

Gln103 provides a ligand contact to FMN. Tyr173 acts as the Proton donor in catalysis. Residue 348–349 (AR) participates in FMN binding.

The protein belongs to the NADH:flavin oxidoreductase/NADH oxidase family. The cofactor is FMN.

It carries out the reaction 2 4-sulfanylbutanoate + NAD(+) = 4,4'-disulfanyldibutanoate + NADH + H(+). Its activity is regulated as follows. Inactivated by cobalt, nickel and zinc ions. Involved in the degradation of the organic disulfide 4,4'-dithiodibutyric acid (DTDB). Catalyzes the initial cleavage of DTDB into 2 molecules of 4-mercaptobutyric acid (4MB). Low activities are observed with other disulfide compounds, such as 3,3'-dithiodipropionic acid DTDP, 3,3'-thiodipropionic acid TDP and DTNB. In Rhodococcus erythropolis (Arthrobacter picolinophilus), this protein is 4,4'-dithiodibutanoate disulfide reductase.